The following is a 365-amino-acid chain: Transcription factor TCP2 (365 aa).

The 59-residue stretch at 42-100 folds into the TCP domain; the sequence is GKDRHSKVLTSKGPRDRRVRLSVSTALQFYDLQDRLGYDQPSKAVEWLIKAAEDSISEL. Over residues 130–150 the composition is skewed to low complexity; the sequence is KSACSSNSDTSKNSSGLSLSR. Disordered stretches follow at residues 130 to 202 and 220 to 245; these read KSAC…SAPS and QTHF…HPHH. Residues 151–172 form the R domain; sequence SELRDKARERARERTAKETKER. Basic and acidic residues predominate over residues 151-176; the sequence is SELRDKARERARERTAKETKERDHNH. The segment covering 177 to 202 has biased composition (polar residues); it reads TSFTDLLNSGSDPVNSNRQWMASAPS.

In terms of assembly, interacts with SPL. Interacts with CRY1. As to expression, expressed in cotyledons, particularly in the vascular region, in leaves, roots, buds, flowers and immature siliques.

The protein localises to the nucleus. In terms of biological role, plays a pivotal role in the control of morphogenesis of shoot organs by negatively regulating the expression of boundary-specific genes such as CUC genes, probably through the induction of miRNA (e.g. miR164). Participates in ovule development. Promotes light-regulated transcription of CHS, CAB, HYH and HY5. Positively regulates photomorphogenesis (e.g. hypocotyl elongation inhibition and cotyledon opening in response to blue light). This Arabidopsis thaliana (Mouse-ear cress) protein is Transcription factor TCP2.